We begin with the raw amino-acid sequence, 506 residues long: D-alanine--D-alanyl carrier protein ligase (506 aa).

An ATP-binding site is contributed by 152 to 153; that stretch reads TS. Residue D197 participates in D-alanine binding. 292 to 297 is an ATP binding site; the sequence is NTYGPT. V301 lines the D-alanine pocket. ATP is bound by residues D383, 395–398, and K494; that span reads YRGR. Residue K494 participates in D-alanine binding.

It belongs to the ATP-dependent AMP-binding enzyme family. DltA subfamily.

It is found in the cytoplasm. It carries out the reaction holo-[D-alanyl-carrier protein] + D-alanine + ATP = D-alanyl-[D-alanyl-carrier protein] + AMP + diphosphate. It functions in the pathway cell wall biogenesis; lipoteichoic acid biosynthesis. Catalyzes the first step in the D-alanylation of lipoteichoic acid (LTA), the activation of D-alanine and its transfer onto the D-alanyl carrier protein (Dcp) DltC. In an ATP-dependent two-step reaction, forms a high energy D-alanyl-AMP intermediate, followed by transfer of the D-alanyl residue as a thiol ester to the phosphopantheinyl prosthetic group of the Dcp. D-alanylation of LTA plays an important role in modulating the properties of the cell wall in Gram-positive bacteria, influencing the net charge of the cell wall. This is D-alanine--D-alanyl carrier protein ligase from Lacticaseibacillus rhamnosus (Lactobacillus rhamnosus).